The sequence spans 429 residues: Cell wall protein ECM33 (429 aa).

The first 19 residues, 1 to 19 (MQFKNALTATAILSASALA), serve as a signal peptide directing secretion. N-linked (GlcNAc...) asparagine glycans are attached at residues N21, N56, N82, N196, N209, N227, N234, N241, N267, N279, N304, and N328. S339 bears the Phosphoserine mark. Residues 361–401 (LSSTSTESSKSSATSSASSSGDASNAQANVSASASSSSSSS) show a composition bias toward low complexity. A disordered region spans residues 361–410 (LSSTSTESSKSSATSSASSSGDASNAQANVSASASSSSSSSKKSKGAAPE). N-linked (GlcNAc...) asparagine glycosylation occurs at N389. G406 carries the GPI-anchor amidated glycine lipid modification. The propeptide at 407–429 (AAPELVPATSFMGVVAAVGVALL) is removed in mature form.

The protein belongs to the SPS2 family. The GPI-anchor is attached to the protein in the endoplasmic reticulum and serves to target the protein to the cell surface. There, the glucosamine-inositol phospholipid moiety is cleaved off and the GPI-modified mannoprotein is covalently attached via its lipidless GPI glycan remnant to the 1,6-beta-glucan of the outer cell wall layer. Post-translationally, extensively N-glycosylated.

The protein resides in the cell membrane. The protein localises to the secreted. It is found in the cell wall. Functionally, required for proper cell wall integrity and for the correct assembly of the mannoprotein outer layer of the cell wall. Important for apical bud growth. The protein is Cell wall protein ECM33 (ECM33) of Saccharomyces cerevisiae (strain ATCC 204508 / S288c) (Baker's yeast).